The chain runs to 1086 residues: Lysine-specific demethylase 4B (1086 aa).

The 43-residue stretch at 15-57 (IMTFRPTMDEFRDFNRYVAYIESQGAHRAGLAKIIPPKEWKPR) folds into the JmjN domain. A 2-oxoglutarate-binding site is contributed by tyrosine 133. A JmjC domain is found at 146–309 (VAQWNIGNLR…YGKVATQCTC (164 aa)). Fe cation is bound by residues histidine 189 and glutamate 191. Asparagine 199 and lysine 207 together coordinate 2-oxoglutarate. Residues cysteine 235 and histidine 241 each contribute to the Zn(2+) site. Lysine 242 is a 2-oxoglutarate binding site. Histidine 277 contacts Fe cation. 2 residues coordinate Zn(2+): cysteine 307 and cysteine 309. The segment covering 379 to 395 (SRPWRKAEEERRREPTR) has biased composition (basic and acidic residues). 2 disordered regions span residues 379–536 (SRPW…PPGA) and 575–624 (PMEL…LSVV). Over residues 401 to 410 (SHRRRSQPKK) the composition is skewed to basic residues. The span at 441–450 (MPEDEEEEEL) shows a compositional bias: acidic residues. The span at 456–467 (HEAEGVEEDGRG) shows a compositional bias: basic and acidic residues. The segment covering 468–480 (KPRPTKARNKKKT) has biased composition (basic residues). The span at 512–522 (GPAMGPMAAEG) shows a compositional bias: low complexity. Positions 585-597 (QAQAGDSQGTTPF) are enriched in polar residues. Lysine 599 bears the N6-acetyllysine mark. The segment at 719–777 (MCFTSSGENTEPLPANSYVGEDGTSPLISCAHCCLQVHASCYGVRPELAKEGWTCSRCA) adopts a PHD-type 1 zinc-finger fold. The segment at 782 to 815 (TAECCLCNLRGGALQRTTEHRWIHVICAIAVPEV) adopts a C2HC pre-PHD-type zinc-finger fold. The PHD-type 2 zinc-finger motif lies at 838 to 895 (LKCIYCRKRMKRVSGACIQCSYEHCSTSFHVTCAHAAGVLMEPDDWPYVVSITCLKHR). Tudor domains lie at 905–962 (RTVS…CLRL) and 963–1019 (GPPP…EELP). The tract at residues 1024–1043 (SRLSLSTGTPQEPSFSGDDV) is disordered. The segment covering 1026 to 1037 (LSLSTGTPQEPS) has biased composition (polar residues).

Belongs to the JHDM3 histone demethylase family. Fe(2+) serves as cofactor.

It localises to the nucleus. The catalysed reaction is N(6),N(6),N(6)-trimethyl-L-lysyl(9)-[histone H3] + 2 2-oxoglutarate + 2 O2 = N(6)-methyl-L-lysyl(9)-[histone H3] + 2 formaldehyde + 2 succinate + 2 CO2. Its function is as follows. Histone demethylase that specifically demethylates 'Lys-9' of histone H3, thereby playing a role in histone code. Does not demethylate histone H3 'Lys-4', H3 'Lys-27', H3 'Lys-36' nor H4 'Lys-20'. Only able to demethylate trimethylated H3 'Lys-9', with a weaker activity than KDM4A, KDM4C and KDM4D. Demethylation of Lys residue generates formaldehyde and succinate. Plays a critical role in the development of the central nervous system (CNS). The polypeptide is Lysine-specific demethylase 4B (Kdm4b) (Mus musculus (Mouse)).